Consider the following 156-residue polypeptide: Histone H2B.2 (156 aa).

Basic and acidic residues-rich tracts occupy residues 1–10 (MAPKKDEKPA) and 24–58 (AKAE…GEKK). The disordered stretch occupies residues 1–63 (MAPKKDEKPA…DGEKKDKKKK (63 aa)). N6-acetyllysine is present on residues lysine 40 and lysine 41. Lysine 152 is covalently cross-linked (Glycyl lysine isopeptide (Lys-Gly) (interchain with G-Cter in ubiquitin)).

The protein belongs to the histone H2B family. As to quaternary structure, the nucleosome is a histone octamer containing two molecules each of H2A, H2B, H3 and H4 assembled in one H3-H4 heterotetramer and two H2A-H2B heterodimers. The octamer wraps approximately 147 bp of DNA. Post-translationally, the N-terminus is blocked. In terms of processing, can be acetylated to form H2BK33ac and H2BK34ac. Acetylated mainly on the ubiquitinated form. Monoubiquitinated to form H2BK143ub1; which is increased during the light period and may give a specific tag for epigenetic transcriptional activation.

The protein localises to the nucleus. Its subcellular location is the chromosome. Its function is as follows. Core component of nucleosome. Nucleosomes wrap and compact DNA into chromatin, limiting DNA accessibility to the cellular machineries which require DNA as a template. Histones thereby play a central role in transcription regulation, DNA repair, DNA replication and chromosomal stability. DNA accessibility is regulated via a complex set of post-translational modifications of histones, also called histone code, and nucleosome remodeling. The protein is Histone H2B.2 of Chlamydomonas reinhardtii (Chlamydomonas smithii).